The primary structure comprises 532 residues: MEGESYHNETTVNGTPVNHQALERHGLWEVITIAAVTAVVSLMTIVGNVLVMISFKVNSQLKTVNNYYLLSLACADLIIGIFSMNLYTTYILMGRWVLGSLACDLWLALDYVASNASVMNLLVISFDRYFSITRPLTYRAKRTPKRAGIMIGLAWLVSFILWAPAILCWQYLVGKRTVPPDECQIQFLSEPTITFGTAIAAFYIPVSVMTILYCRIYRETEKRTKDLADLQGSDSVAEVKKRKPAHRTLLRSFFSCPRPSLAQRVRNQASWSSSRRSTSTTGKPTQATDLSADWEKAEQVTNCSSCPSSEDEAKATTDPVFQVVCKNEAKESPGKEFNTQETKETFVSPRTENNDYDTPKYFLSPGAAHRLKSQKCVAYKFRLVVKADGTQETNNGCRKVKIMPCSFPVSKDPSTKGLDPHLSHQMTKRKRMVLVKERKAAQTLSAILLAFIITWTPYNIMVLVSTFCDKCVPVTLWHLGYWLCYVNSTINPICYALCNRTFRKTFKLLLLCRWKKKKVEEKLYWQGNSKLP.

The Extracellular portion of the chain corresponds to 1-29 (MEGESYHNETTVNGTPVNHQALERHGLWE). A glycan (N-linked (GlcNAc...) asparagine) is linked at N8. A helical membrane pass occupies residues 30 to 53 (VITIAAVTAVVSLMTIVGNVLVMI). At 54–66 (SFKVNSQLKTVNN) the chain is on the cytoplasmic side. A helical transmembrane segment spans residues 67–87 (YYLLSLACADLIIGIFSMNLY). Residues 88–104 (TTYILMGRWVLGSLACD) lie on the Extracellular side of the membrane. A disulfide bridge connects residues C103 and C183. A helical membrane pass occupies residues 105–126 (LWLALDYVASNASVMNLLVISF). At 127–146 (DRYFSITRPLTYRAKRTPKR) the chain is on the cytoplasmic side. The helical transmembrane segment at 147–169 (AGIMIGLAWLVSFILWAPAILCW) threads the bilayer. Residues 170-191 (QYLVGKRTVPPDECQIQFLSEP) lie on the Extracellular side of the membrane. The helical transmembrane segment at 192–214 (TITFGTAIAAFYIPVSVMTILYC) threads the bilayer. The Cytoplasmic segment spans residues 215–443 (RIYRETEKRT…LVKERKAAQT (229 aa)). Positions 265-290 (VRNQASWSSSRRSTSTTGKPTQATDL) are disordered. The span at 270–281 (SWSSSRRSTSTT) shows a compositional bias: low complexity. The helical transmembrane segment at 444–464 (LSAILLAFIITWTPYNIMVLV) threads the bilayer. Residues 465-478 (STFCDKCVPVTLWH) are Extracellular-facing. The helical transmembrane segment at 479–498 (LGYWLCYVNSTINPICYALC) threads the bilayer. Residues 499 to 532 (NRTFRKTFKLLLLCRWKKKKVEEKLYWQGNSKLP) are Cytoplasmic-facing. Phosphothreonine is present on residues T501 and T505.

This sequence belongs to the G-protein coupled receptor 1 family. Muscarinic acetylcholine receptor subfamily. CHRM5 sub-subfamily.

It localises to the cell membrane. The protein localises to the postsynaptic cell membrane. Its function is as follows. The muscarinic acetylcholine receptor mediates various cellular responses, including inhibition of adenylate cyclase, breakdown of phosphoinositides and modulation of potassium channels through the action of G proteins. Primary transducing effect is Pi turnover. The sequence is that of Muscarinic acetylcholine receptor M5 (Chrm5) from Mus musculus (Mouse).